We begin with the raw amino-acid sequence, 285 residues long: MNAVSDLRALHAAQPGWQAALSLGFERRGARTVLATRRHVGPLVVQRALYPEGDGVCHAIVVHPPAGIVGGDALRIDVDLGAGAHALLTTPGAGKWYRSAGARGSLVQRIAVGDGAVCEWLPQESIVYDGAAGDLATEVDIAGDGVFIGSEMTCFGRSGAGERYTRGDFAMRTRIRRDGRTLWLERGRVEGGGALLDSPVGLAGWPVTATLLVAAKTVDAALLEACREVPAEAGEGAATLLPGLLVARYRGPACEPGRNWFNRLWTLLRPPLAGRAATLPRIWHT.

It belongs to the UreD family. In terms of assembly, ureD, UreF and UreG form a complex that acts as a GTP-hydrolysis-dependent molecular chaperone, activating the urease apoprotein by helping to assemble the nickel containing metallocenter of UreC. The UreE protein probably delivers the nickel.

The protein localises to the cytoplasm. In terms of biological role, required for maturation of urease via the functional incorporation of the urease nickel metallocenter. This Azoarcus sp. (strain BH72) protein is Urease accessory protein UreD.